The sequence spans 196 residues: Peptidyl-tRNA hydrolase (196 aa).

Tyr-18 contacts tRNA. His-23 serves as the catalytic Proton acceptor. Residues Phe-69, Asn-71, and Asn-117 each contribute to the tRNA site.

This sequence belongs to the PTH family. In terms of assembly, monomer.

The protein localises to the cytoplasm. The enzyme catalyses an N-acyl-L-alpha-aminoacyl-tRNA + H2O = an N-acyl-L-amino acid + a tRNA + H(+). In terms of biological role, hydrolyzes ribosome-free peptidyl-tRNAs (with 1 or more amino acids incorporated), which drop off the ribosome during protein synthesis, or as a result of ribosome stalling. Its function is as follows. Catalyzes the release of premature peptidyl moieties from peptidyl-tRNA molecules trapped in stalled 50S ribosomal subunits, and thus maintains levels of free tRNAs and 50S ribosomes. The sequence is that of Peptidyl-tRNA hydrolase from Aliivibrio fischeri (strain MJ11) (Vibrio fischeri).